Reading from the N-terminus, the 297-residue chain is Manganese efflux system protein MneP (297 aa).

6 helical membrane-spanning segments follow: residues 12-32 (VALI…FFGL), 43-63 (GIHS…IGIS), 85-105 (IVGI…ILSF), 111-131 (VPQY…EILY), 155-175 (GDIV…IGNS), and 177-197 (GWSY…YLIF).

The protein belongs to the cation diffusion facilitator (CDF) transporter (TC 2.A.4) family.

The protein localises to the cell membrane. Primary efflux pump for manganese. May prevent manganese intoxication. The sequence is that of Manganese efflux system protein MneP from Bacillus subtilis (strain 168).